Consider the following 488-residue polypeptide: Probable metabolite transport protein YBR241C (488 aa).

Residues M1 to P18 lie on the Cytoplasmic side of the membrane. A helical transmembrane segment spans residues L19 to G39. Residues Y40–Y87 lie on the Vacuolar side of the membrane. N-linked (GlcNAc...) asparagine glycosylation occurs at N63. The helical transmembrane segment at G88–W108 threads the bilayer. The Cytoplasmic portion of the chain corresponds to A109–A121. The chain crosses the membrane as a helical span at residues S122–L142. Topologically, residues F143–F146 are vacuolar. A helical transmembrane segment spans residues L147–A167. Residues P168–M178 are Cytoplasmic-facing. The chain crosses the membrane as a helical span at residues N179–A198. At D199–R204 the chain is on the vacuolar side. The chain crosses the membrane as a helical span at residues W205–D225. The Cytoplasmic portion of the chain corresponds to E226–V299. Positions E258–H279 are enriched in basic and acidic residues. A disordered region spans residues E258–G281. Residues I300–V320 traverse the membrane as a helical segment. Over K321 to V322 the chain is Vacuolar. Residues I323 to A337 form a helical membrane-spanning segment. Residues I338–V344 are Cytoplasmic-facing. A helical transmembrane segment spans residues V345–A364. The Vacuolar segment spans residues S365–T390. The helical transmembrane segment at A391–I411 threads the bilayer. Topologically, residues G412–D419 are cytoplasmic. A helical transmembrane segment spans residues A420–F442. Topologically, residues P443–H446 are vacuolar. A helical transmembrane segment spans residues G447–M463. Residues F464–Y488 are Cytoplasmic-facing.

It belongs to the major facilitator superfamily. Sugar transporter (TC 2.A.1.1) family.

It is found in the vacuole membrane. This Saccharomyces cerevisiae (strain ATCC 204508 / S288c) (Baker's yeast) protein is Probable metabolite transport protein YBR241C.